Consider the following 329-residue polypeptide: D-alanine--D-alanine ligase (329 aa).

In terms of domain architecture, ATP-grasp spans 120-326; sequence KLWLSAIGIP…FAHYLEQILR (207 aa). Residue 150–205 coordinates ATP; it reads ALAKWGKVFIKAASQGSSVGCYSASNETDLLQGIKDAFGYSEQVLIEKAVKPRELE. D280, E293, and N295 together coordinate Mg(2+).

This sequence belongs to the D-alanine--D-alanine ligase family. The cofactor is Mg(2+). Mn(2+) serves as cofactor.

Its subcellular location is the cytoplasm. It catalyses the reaction 2 D-alanine + ATP = D-alanyl-D-alanine + ADP + phosphate + H(+). It participates in cell wall biogenesis; peptidoglycan biosynthesis. Functionally, cell wall formation. This is D-alanine--D-alanine ligase from Aeromonas salmonicida (strain A449).